Consider the following 268-residue polypeptide: Nickel import ATP-binding protein NikE (268 aa).

The ABC transporter domain maps to 4–252; the sequence is LNVCGLSHHY…SSDAGRVLQN (249 aa). ATP is bound at residue 45–52; it reads GRSGCGKS.

Belongs to the ABC transporter superfamily. Nickel importer (TC 3.A.1.5.3) family. The complex is composed of two ATP-binding proteins (NikD and NikE), two transmembrane proteins (NikB and NikC) and a solute-binding protein (NikA).

It is found in the cell inner membrane. It carries out the reaction Ni(2+)(out) + ATP + H2O = Ni(2+)(in) + ADP + phosphate + H(+). Functionally, part of the ABC transporter complex NikABCDE involved in nickel import. Responsible for energy coupling to the transport system. The polypeptide is Nickel import ATP-binding protein NikE (Shigella flexneri).